A 289-amino-acid polypeptide reads, in one-letter code: uncharacterized protein (289 aa).

The segment covering 80–96 (PLNESRTSFKNIPQSRN) has biased composition (polar residues). Disordered regions lie at residues 80–101 (PLNE…PRDY) and 136–157 (PREN…RMRE).

This is an uncharacterized protein from Acanthamoeba polyphaga (Amoeba).